Here is a 405-residue protein sequence, read N- to C-terminus: Teichoic acid D-alanyltransferase (405 aa).

Residues 1 to 9 (MLNLQPYEN) are Extracellular-facing. The chain crosses the membrane as a helical span at residues 10–29 (PQYFVYLIIALLPVIIGMFK). At 30-33 (GFRM) the chain is on the cytoplasmic side. Residues 34-49 (HWYESIFSLVFLVLIF) traverse the membrane as a helical segment. Topologically, residues 50–53 (DADK) are extracellular. The chain crosses the membrane as a helical span at residues 54–80 (WPQGKALLGYVVFNLLLVYAYFKYRTR). The Cytoplasmic portion of the chain corresponds to 81–86 (EGSKNS). Residues 87-111 (TAVFYLSVALGIAHVAVVKFTPLFQ) traverse the membrane as a helical segment. At 112–121 (HHGSILGFLG) the chain is on the extracellular side. Residues 122-138 (ISYLTFRVVGTIMEIRD) traverse the membrane as a helical segment. Over 139–145 (GSIKDLN) the chain is Cytoplasmic. Residues 146-175 (MWKFIQFLLFFPTISSGPIDRYRRFVKDYD) lie within the membrane without spanning it. Residues 176 to 179 (RVPD) lie on the Cytoplasmic side of the membrane. The helical transmembrane segment at 180–223 (PEHYAQLVTKAIHYLMLGFLYKFILGYIFGTLWLPSVEHMAMAS) threads the bilayer. Residues 224–232 (RGGAFLGLS) are Extracellular-facing. The chain crosses the membrane as a helical span at residues 233–264 (WPVVGVMYAYSGYLFFDFAGYSLFAVAISYLM). At 265-274 (GIETPMNFNK) the chain is on the cytoplasmic side. The stretch at 275–310 (PWSHITSRLLNRWQLSLSFWFRDYIYMRFVFFMMKH) is an intramembrane region. At 311 to 315 (KWIKS) the chain is on the cytoplasmic side. Residues 316–335 (RVWTAFVGYLVLFLIMGIWH) traverse the membrane as a helical segment. His335 is an active-site residue. At 336–338 (GET) the chain is on the extracellular side. A helical transmembrane segment spans residues 339 to 372 (WYYIVYGLFHAMLINLTDAWLRFKKKHKDFFPHN). The Cytoplasmic portion of the chain corresponds to 373 to 378 (RATHYP). The helical transmembrane segment at 379–399 (SPFSMTANAVCFSFLIFSGFL) threads the bilayer. The Extracellular segment spans residues 400–405 (DKLWFH).

The protein belongs to the membrane-bound acyltransferase family.

Its subcellular location is the cell membrane. It functions in the pathway cell wall biogenesis; lipoteichoic acid biosynthesis. O-acyltransferase that catalyzes D-alanylation of both teichoic acid and lipoteichoic acid (LTA). D-alanylation of LTA plays an important role in modulating the properties of the cell wall in Gram-positive bacteria, influencing the net charge of the cell wall. Catalyzes D-alanylation from DltC carrier protein. The chain is Teichoic acid D-alanyltransferase from Lacticaseibacillus rhamnosus (Lactobacillus rhamnosus).